The sequence spans 295 residues: MEFWGVEVKVGQTVTVDPMDPVDSYIHISQVALGEAKKDKPNEPVVLYLKVGEQKIVLGTLSRDGIPHLSLDLVLDSDSELSHTSKSASVFFCGYKVLTGNDNASDFSDSSEEDEELALEGQDNGKPELKAEGAKVTKPSKSIPKIGAPAKAADPKKDEDDDSDDESDDDLAGEDESGSSDEMDDDSNSEEESDGDDEETPAKKVDQGKKRPNESAAKTPISAKKAKTATPEKTDGKKSVHVATPHPSKKGGKTPNSTKGQTPNSAGQLSCASCKKSFTNEAGLQQHKKAKHGGQ.

Residues 105-271 (SDFSDSSEED…TPNSAGQLSC (167 aa)) are disordered. Residues 109–118 (DSSEEDEELA) are compositionally biased toward acidic residues. Residues 123–135 (DNGKPELKAEGAK) show a composition bias toward basic and acidic residues. Over residues 159 to 199 (EDDDSDDESDDDLAGEDESGSSDEMDDDSNSEEESDGDDEE) the composition is skewed to acidic residues. The span at 200–213 (TPAKKVDQGKKRPN) shows a compositional bias: basic and acidic residues. Positions 254–271 (TPNSTKGQTPNSAGQLSC) are enriched in polar residues. Residues 269 to 292 (LSCASCKKSFTNEAGLQQHKKAKH) form a C2H2-type zinc finger.

This sequence belongs to the histone deacetylase HD2 family.

Its subcellular location is the nucleus. The protein resides in the nucleolus. Mediates the deacetylation of lysine residues on the N-terminal part of the core histones (H2A, H2B, H3 and H4). Histone deacetylation gives a tag for epigenetic repression and plays an important role in transcriptional regulation, cell cycle progression and developmental events. This Glycine max (Soybean) protein is Histone deacetylase HDT1 (HDT1).